Reading from the N-terminus, the 179-residue chain is Embryo-specific protein ATS3A (179 aa).

The signal sequence occupies residues 1-22; that stretch reads MLRLAIPLFLFALCSFTLFSSA. The PLAT domain occupies 48 to 158; it reads CSYTVIIKTS…NSVWYGFNVC (111 aa).

Interacts with EULS3 (via N-terminus). As to expression, expressed in roots, rosette leaves, stems, cauline leaves and flowers.

The protein resides in the secreted. In terms of biological role, may play a role during embryo development. The polypeptide is Embryo-specific protein ATS3A (Arabidopsis thaliana (Mouse-ear cress)).